Consider the following 478-residue polypeptide: Lipoprotein lipase (478 aa).

Residues 1 to 28 form the signal peptide; sequence MESKALLLLALSVCLQSLTVSRGGLVAA. An interaction with GPIHBP1 region spans residues 35 to 56; sequence KDFRDIESKFALRTPEDTAEDT. The cysteines at positions 57 and 70 are disulfide-linked. N-linked (GlcNAc...) asparagine glycosylation is present at asparagine 73. A 3'-nitrotyrosine modification is found at tyrosine 124. Serine 162 serves as the catalytic Nucleophile. Residue aspartate 186 is the Charge relay system of the active site. 3'-nitrotyrosine is present on tyrosine 194. Ca(2+) contacts are provided by alanine 197, arginine 200, serine 202, and aspartate 205. A disulfide bridge connects residues cysteine 246 and cysteine 269. The segment at 246-269 is essential for determining substrate specificity; sequence CNIGEALRVIAERGLGDVDQLVKC. The active-site Charge relay system is the histidine 271. Asparagine 287 carries N-linked (GlcNAc...) asparagine glycosylation. Intrachain disulfides connect cysteine 294–cysteine 313 and cysteine 305–cysteine 308. The region spanning 344 to 467 is the PLAT domain; it reads FHYQVKIHFS…KGKSPVIFVK (124 aa). The residue at position 346 (tyrosine 346) is a 3'-nitrotyrosine. N-linked (GlcNAc...) asparagine glycosylation occurs at asparagine 389. The interval 420-424 is important for interaction with lipoprotein particles; that stretch reads WSNWW. Residues 433–437 form an important for heparin binding region; sequence KIRVK. The segment at 446–470 is interaction with GPIHBP1; the sequence is IFCSREKMSYLQKGKSPVIFVKCHD. Residues cysteine 448 and cysteine 468 are joined by a disulfide bond.

The protein belongs to the AB hydrolase superfamily. Lipase family. In terms of assembly, homodimer. Interacts with GPIHBP1 with 1:1 stoichiometry. Interacts with APOC2; the interaction activates LPL activity in the presence of lipids. Interaction with heparan sulfate proteoglycans is required to protect LPL against loss of activity. Associates with lipoprotein particles in blood plasma. Interacts with LMF1 and SEL1L; interaction with SEL1L is required to prevent aggregation of newly synthesized LPL in the endoplasmic reticulum (ER), and for normal export of LPL from the ER to the extracellular space. Interacts with SORL1; SORL1 acts as a sorting receptor, promoting LPL localization to endosomes and later to lysosomes, leading to degradation of newly synthesized LPL. In terms of processing, tyrosine nitration after lipopolysaccharide (LPS) challenge down-regulates the lipase activity. As to expression, detected in milk (at protein level).

The protein localises to the cell membrane. Its subcellular location is the secreted. The protein resides in the extracellular space. It is found in the extracellular matrix. It catalyses the reaction a triacylglycerol + H2O = a diacylglycerol + a fatty acid + H(+). The catalysed reaction is a 1,2-diacyl-sn-glycero-3-phosphocholine + H2O = a 2-acyl-sn-glycero-3-phosphocholine + a fatty acid + H(+). The enzyme catalyses 1,2,3-tri-(9Z-octadecenoyl)-glycerol + H2O = di-(9Z)-octadecenoylglycerol + (9Z)-octadecenoate + H(+). It carries out the reaction 1,2-di-(9Z-octadecenoyl)-sn-glycero-3-phosphocholine + H2O = (9Z-octadecenoyl)-sn-glycero-3-phosphocholine + (9Z)-octadecenoate + H(+). It catalyses the reaction 1,2,3-tributanoylglycerol + H2O = dibutanoylglycerol + butanoate + H(+). The catalysed reaction is 1,2-dihexadecanoyl-sn-glycero-3-phosphocholine + H2O = hexadecanoyl-sn-glycero-3-phosphocholine + hexadecanoate + H(+). With respect to regulation, the apolipoprotein APOC2 acts as a coactivator of LPL activity. Ca(2+) binding promotes protein stability and formation of the active homodimer. Interaction with GPIHBP1 protects LPL against inactivation by ANGPTL4. Key enzyme in triglyceride metabolism. Catalyzes the hydrolysis of triglycerides from circulating chylomicrons and very low density lipoproteins (VLDL), and thereby plays an important role in lipid clearance from the blood stream, lipid utilization and storage. Although it has both phospholipase and triglyceride lipase activities it is primarily a triglyceride lipase with low but detectable phospholipase activity. Mediates margination of triglyceride-rich lipoprotein particles in capillaries. Recruited to its site of action on the luminal surface of vascular endothelium by binding to GPIHBP1 and cell surface heparan sulfate proteoglycans. The polypeptide is Lipoprotein lipase (LPL) (Bos taurus (Bovine)).